The sequence spans 1461 residues: Autotransporter adhesin SadA (1461 aa).

An N-terminal signal peptide occupies residues 1–54 (MNRIFKVLWNAATGTFVVTSETAKSRGKKNGRRKLAVSALIGLSSIMVSADALA). The surface exposed passenger domain stretch occupies residues 55-1372 (NAGNDTGDGV…EEANTYTDQK (1318 aa)). The segment at 1373 to 1461 (MGEMNSKIKG…SAAIGAGFQW (89 aa)) is translocator domain. 4 consecutive transmembrane segments (beta stranded) span residues 1407 to 1417 (GANMTSIAGGT), 1421 to 1431 (ESAVAIGVSMV), 1440 to 1446 (KLQGTSN), and 1450 to 1461 (DYSAAIGAGFQW).

This sequence belongs to the autotransporter-2 (AT-2) (TC 1.B.40) family. As to quaternary structure, homotrimer.

The protein localises to the cell surface. It localises to the cell outer membrane. Involved in cell aggregation, biofilm formation, and adhesion to human intestinal epithelial cells. The sequence is that of Autotransporter adhesin SadA from Salmonella typhimurium (strain LT2 / SGSC1412 / ATCC 700720).